The chain runs to 292 residues: MAPKRQSPLPLQKKKPRPPPALGLEETSASAGLPKKGEKEQQEAIEHIDEVQNEIDRLNEQDSEEILKVEQKYNKLRQPFFQKRSELIAKIPNFGVTTFVNHPQVSSLLGEEDEEALHYLTKVEVTEFEDIKSGYRIDFYFDENPYFENKVFSKEFHLNESGDPSSKSTKIKWKSGKDVTKRSSQTQNKASRKRQHEEPESFFTWFTDHSDAGADELEEVIKDDIWPNPLQYYLVPDMDDEEGGEDDDDDDDDGDEGEEELEDIDEGDEDEGEEDEDDDEGEEGEEDEGEDD.

The span at 1 to 11 (MAPKRQSPLPL) shows a compositional bias: low complexity. Disordered stretches follow at residues 1–43 (MAPK…EQQE) and 158–292 (LNES…GEDD). Positions 35–78 (KKGEKEQQEAIEHIDEVQNEIDRLNEQDSEEILKVEQKYNKLRQ) form a coiled coil. Acidic residues predominate over residues 237 to 292 (DMDDEEGGEDDDDDDDDGDEGEEELEDIDEGDEDEGEEDEDDDEGEEGEEDEGEDD).

The protein belongs to the nucleosome assembly protein (NAP) family. As to expression, expressed in endothelial cell (EC) and protein-induced pluripotent stem (PiPS) endothelial cell (EC) (at protein level).

It is found in the cytoplasm. The protein resides in the nucleus. Plays a role as a transcriptional activator involved in the early stage of somatic cell reprogramming. Promotes the differentiation of protein-induced pluripotent stem (PiPS) cells into endothelial cells and the formation of vascular-like tubes (in vitro). Involved in the transcription induction of vascular endothelial-cadherin (VE-cadherin) expression. Associates to the VE-cadherin gene promoter. The polypeptide is Protein SETSIP (SETSIP) (Homo sapiens (Human)).